Reading from the N-terminus, the 156-residue chain is Small ribosomal subunit protein uS7 (156 aa).

It belongs to the universal ribosomal protein uS7 family. As to quaternary structure, part of the 30S ribosomal subunit. Contacts proteins S9 and S11.

In terms of biological role, one of the primary rRNA binding proteins, it binds directly to 16S rRNA where it nucleates assembly of the head domain of the 30S subunit. Is located at the subunit interface close to the decoding center, probably blocks exit of the E-site tRNA. This Parafrankia sp. (strain EAN1pec) protein is Small ribosomal subunit protein uS7.